Reading from the N-terminus, the 149-residue chain is Phosphoribosyl-AMP cyclohydrolase (149 aa).

Asp-92 serves as a coordination point for Mg(2+). Cys-93 serves as a coordination point for Zn(2+). Positions 94 and 96 each coordinate Mg(2+). Positions 111 and 118 each coordinate Zn(2+).

The protein belongs to the PRA-CH family. As to quaternary structure, homodimer. Requires Mg(2+) as cofactor. Zn(2+) serves as cofactor.

It is found in the cytoplasm. It catalyses the reaction 1-(5-phospho-beta-D-ribosyl)-5'-AMP + H2O = 1-(5-phospho-beta-D-ribosyl)-5-[(5-phospho-beta-D-ribosylamino)methylideneamino]imidazole-4-carboxamide. It participates in amino-acid biosynthesis; L-histidine biosynthesis; L-histidine from 5-phospho-alpha-D-ribose 1-diphosphate: step 3/9. Catalyzes the hydrolysis of the adenine ring of phosphoribosyl-AMP. This Rhizobium rhizogenes (strain K84 / ATCC BAA-868) (Agrobacterium radiobacter) protein is Phosphoribosyl-AMP cyclohydrolase.